The chain runs to 76 residues: uncharacterized protein (76 aa).

Helical transmembrane passes span 16 to 33 (FAFT…GAVL) and 45 to 61 (TMFL…FFCA).

It localises to the cell membrane. This is an uncharacterized protein from Bacillus subtilis (strain 168).